Consider the following 512-residue polypeptide: Differentially expressed in FDCP 8 homolog (512 aa).

Methionine 1 is modified (N-acetylmethionine). Positions 77 to 116 are disordered; sequence NPFNKQSGPRQHEQGPGEEVPDVTPEEALPELPPGEPEFR. A compositionally biased stretch (acidic residues) spans 95–105; sequence EVPDVTPEEAL. 2 Phorbol-ester/DAG-type zinc fingers span residues 199-250 and 429-489; these read EHRF…SKPC and IHTL…STTC. Serine 501 is modified (phosphoserine).

The protein belongs to the DEF8 family. In terms of assembly, interacts (via C-terminus) with PLEKHM1; this interaction is weak but increased in a RAB7A-dependent manner.

Functionally, positively regulates lysosome peripheral distribution and ruffled border formation in osteoclasts. Involved in bone resorption. In Homo sapiens (Human), this protein is Differentially expressed in FDCP 8 homolog (DEF8).